A 131-amino-acid chain; its full sequence is Holo-[acyl-carrier-protein] synthase (131 aa).

Mg(2+)-binding residues include D8 and E59.

The protein belongs to the P-Pant transferase superfamily. AcpS family. It depends on Mg(2+) as a cofactor.

It localises to the cytoplasm. The catalysed reaction is apo-[ACP] + CoA = holo-[ACP] + adenosine 3',5'-bisphosphate + H(+). Functionally, transfers the 4'-phosphopantetheine moiety from coenzyme A to a Ser of acyl-carrier-protein. In Rickettsia massiliae (strain Mtu5), this protein is Holo-[acyl-carrier-protein] synthase.